A 197-amino-acid polypeptide reads, in one-letter code: Prefoldin subunit 3 (197 aa).

An N-acetylalanine modification is found at A2. K59 bears the N6-acetyllysine mark.

The protein belongs to the prefoldin subunit alpha family. Heterohexamer of two PFD-alpha type and four PFD-beta type subunits. Binds to the C-terminal part of VHL.

Its subcellular location is the cytoplasm. The protein localises to the nucleus. Binds specifically to cytosolic chaperonin (c-CPN) and transfers target proteins to it. Binds to nascent polypeptide chain and promotes folding in an environment in which there are many competing pathways for nonnative proteins. This is Prefoldin subunit 3 (VBP1) from Bos taurus (Bovine).